The chain runs to 265 residues: Expansin-like A1 (265 aa).

Residues 1–20 (MGSFLFLIVVIFLFSSSVNA) form the signal peptide. The Expansin-like EG45 domain occupies 41–147 (SGACAYGSMA…QRVPCDYGNK (107 aa)). The chain crosses the membrane as a helical span at residues 42 to 62 (GACAYGSMATSFFAGHIAAAI). Residues Asn99 and Asn102 are each glycosylated (N-linked (GlcNAc...) asparagine). One can recognise an Expansin-like CBD domain in the interval 161–244 (NYLEIKLLYQ…NWEAGKIYDA (84 aa)).

The protein belongs to the expansin family. Expansin-like A subfamily.

The protein localises to the membrane. The chain is Expansin-like A1 (EXLA1) from Arabidopsis thaliana (Mouse-ear cress).